We begin with the raw amino-acid sequence, 107 residues long: UPF0145 protein TT_C0892 (107 aa).

This sequence belongs to the UPF0145 family.

The polypeptide is UPF0145 protein TT_C0892 (Thermus thermophilus (strain ATCC BAA-163 / DSM 7039 / HB27)).